A 475-amino-acid polypeptide reads, in one-letter code: tRNA-2-methylthio-N(6)-dimethylallyladenosine synthase (475 aa).

The MTTase N-terminal domain maps to 3–120; sequence KKLHIKTWGC…LPEMIDQIRA (118 aa). Positions 12, 49, 83, 157, 161, and 164 each coordinate [4Fe-4S] cluster. Residues 143 to 375 form the Radical SAM core domain; it reads RADGPSAFVS…QDRITQQAMR (233 aa). Residues 378-441 form the TRAM domain; that stretch reads RQMVGTVQRI…TNSLRGVFIR (64 aa).

This sequence belongs to the methylthiotransferase family. MiaB subfamily. As to quaternary structure, monomer. [4Fe-4S] cluster is required as a cofactor.

The protein resides in the cytoplasm. The enzyme catalyses N(6)-dimethylallyladenosine(37) in tRNA + (sulfur carrier)-SH + AH2 + 2 S-adenosyl-L-methionine = 2-methylsulfanyl-N(6)-dimethylallyladenosine(37) in tRNA + (sulfur carrier)-H + 5'-deoxyadenosine + L-methionine + A + S-adenosyl-L-homocysteine + 2 H(+). Its function is as follows. Catalyzes the methylthiolation of N6-(dimethylallyl)adenosine (i(6)A), leading to the formation of 2-methylthio-N6-(dimethylallyl)adenosine (ms(2)i(6)A) at position 37 in tRNAs that read codons beginning with uridine. In Shewanella halifaxensis (strain HAW-EB4), this protein is tRNA-2-methylthio-N(6)-dimethylallyladenosine synthase.